Reading from the N-terminus, the 493-residue chain is Probable cytochrome P450 508A2 (493 aa).

A helical transmembrane segment spans residues 1–21 (MIFGIIVYLFLIYILHNAYSK). Residue Cys439 coordinates heme.

The protein belongs to the cytochrome P450 family. Heme serves as cofactor.

It is found in the membrane. The sequence is that of Probable cytochrome P450 508A2 (cyp508A2-1) from Dictyostelium discoideum (Social amoeba).